The primary structure comprises 183 residues: MHLLPELASHHAVSIPELLVSRDERQARQHVWLKRHPVPLVSFTVVAPGPIKDSEVTRRIFNHGVTALRALAAKQGWQIQEQAALVSASGPEGMLSIAAPARDLKLATIELEHSHPLGRLWDIDVLTPEGEILSRRDYSLPPRRCLLCEQSAAVCARGKTHQLTDLLNRMEALLNDVDACNVN.

It belongs to the CitX family.

It catalyses the reaction apo-[citrate lyase ACP] + 2'-(5''-triphospho-alpha-D-ribosyl)-3'-dephospho-CoA = holo-[citrate lyase ACP] + diphosphate. Functionally, transfers 2-(5''-triphosphoribosyl)-3'-dephosphocoenzyme-A on a serine residue to the apo-acyl carrier protein (gamma chain) of the citrate lyase to yield holo-acyl carrier protein. In Escherichia coli (strain 55989 / EAEC), this protein is Probable apo-citrate lyase phosphoribosyl-dephospho-CoA transferase.